The following is a 130-amino-acid chain: Small ribosomal subunit protein uS11 (130 aa).

Belongs to the universal ribosomal protein uS11 family. Part of the 30S ribosomal subunit. Interacts with proteins S7 and S18. Binds to IF-3.

Functionally, located on the platform of the 30S subunit, it bridges several disparate RNA helices of the 16S rRNA. Forms part of the Shine-Dalgarno cleft in the 70S ribosome. This is Small ribosomal subunit protein uS11 from Shewanella frigidimarina (strain NCIMB 400).